We begin with the raw amino-acid sequence, 601 residues long: Leucine-rich repeat-containing protein 40 (601 aa).

LRR repeat units lie at residues 33–56 (ARKSGQLNLSGRGLTEVPASVWRL), 79–101 (QTDLTKLLLSSNKLQSIPDDVKL), 102–124 (LPALVVLDIHDNQLSSLPDSIGD), 125–148 (LEQLQKLILSHNKLTELPSGVWRL), 150–170 (NLRCLHLQQNLIEQIPRDLGQ), 171–193 (LVNLDELDLSNNHLIDIPESLAN), 194–217 (LQNLVKLDLSCNKLKSLPPAISQM), 219–239 (NLRMLDCSRNQMESIPPVLAQ), 240–264 (MESLEQLYLRHNKLRYLPELPCCKT), 266–285 (KELHCGNNQIEVLEAEHLKH), 286–308 (LNALSLLELRDNKVKSLPEEITL), 309–334 (LQGLERLDLTNNDISSLPCGLGTLPK), 336–355 (KSLSLEGNPLRAIRRDLLTK), 397–420 (IKTLKTLDYSEKQDATIPDDVFDA), 423–446 (GNPVANVNFSKNQLTAVPHRIVDL), 447–469 (KDSLADINLGFNKLTTIPADFCH), 470–492 (LKQLMHIDLRNNLLISLPMELEG), 493–516 (LIKLRSVILSFNRFKSFPEVLYRI), 518–539 (SLETILISSNQVGGIDAVQMKT), 540–563 (LSRLSTLDLSNNDIMQVPPELGNC), and 565–586 (SLRALMLDGNPFRNPRAAILIK).

This Danio rerio (Zebrafish) protein is Leucine-rich repeat-containing protein 40 (lrrc40).